A 238-amino-acid chain; its full sequence is Probable transglycosylase SceD 1 (238 aa).

An N-terminal signal peptide occupies residues Met-1–Ala-27. Residues Thr-87–Gln-97 are compositionally biased toward polar residues. A disordered region spans residues Thr-87–Asn-161. Low complexity predominate over residues Glu-102–Glu-156.

It belongs to the transglycosylase family. SceD subfamily.

It is found in the secreted. In terms of biological role, is able to cleave peptidoglycan and affects clumping and separation of bacterial cells. The polypeptide is Probable transglycosylase SceD 1 (sceD1) (Staphylococcus saprophyticus subsp. saprophyticus (strain ATCC 15305 / DSM 20229 / NCIMB 8711 / NCTC 7292 / S-41)).